The chain runs to 299 residues: Recombination-associated protein RdgC (299 aa).

Belongs to the RdgC family.

It localises to the cytoplasm. It is found in the nucleoid. May be involved in recombination. The protein is Recombination-associated protein RdgC of Bordetella parapertussis (strain 12822 / ATCC BAA-587 / NCTC 13253).